Consider the following 365-residue polypeptide: Phosphoserine aminotransferase (365 aa).

An L-glutamate-binding site is contributed by Arg46. Pyridoxal 5'-phosphate-binding positions include 80-81 (AT), Trp106, Thr157, Asp177, and Gln200. N6-(pyridoxal phosphate)lysine is present on Lys201. 242–243 (NT) is a binding site for pyridoxal 5'-phosphate.

Belongs to the class-V pyridoxal-phosphate-dependent aminotransferase family. SerC subfamily. As to quaternary structure, homodimer. Pyridoxal 5'-phosphate is required as a cofactor.

It is found in the cytoplasm. The enzyme catalyses O-phospho-L-serine + 2-oxoglutarate = 3-phosphooxypyruvate + L-glutamate. It carries out the reaction 4-(phosphooxy)-L-threonine + 2-oxoglutarate = (R)-3-hydroxy-2-oxo-4-phosphooxybutanoate + L-glutamate. It participates in amino-acid biosynthesis; L-serine biosynthesis; L-serine from 3-phospho-D-glycerate: step 2/3. It functions in the pathway cofactor biosynthesis; pyridoxine 5'-phosphate biosynthesis; pyridoxine 5'-phosphate from D-erythrose 4-phosphate: step 3/5. Functionally, catalyzes the reversible conversion of 3-phosphohydroxypyruvate to phosphoserine and of 3-hydroxy-2-oxo-4-phosphonooxybutanoate to phosphohydroxythreonine. The sequence is that of Phosphoserine aminotransferase from Leptospira biflexa serovar Patoc (strain Patoc 1 / Ames).